The primary structure comprises 611 residues: Adenosylhomocysteinase 3 (611 aa).

Low complexity-rich tracts occupy residues 1 to 14, 36 to 57, and 68 to 81; these read MSVQVVSAAAAAKV, AAVGAMAPPAGGGDPEAPAPAA, and GPAAALSPAAGKVP. The segment at 1 to 184 is disordered; that stretch reads MSVQVVSAAA…KQQKNSKGSS (184 aa). S2 carries the N-acetylserine modification. An LISN domain, inhibits interaction with ITPR1 region spans residues 2–109; that stretch reads SVQVVSAAAA…DGGEALVSPD (108 aa). Position 107 is a phosphoserine (S107). Over residues 135–144 the composition is skewed to basic residues; the sequence is RPTKIGRRSL. Over residues 145 to 164 the composition is skewed to low complexity; the sequence is SRSISQSSTDSYSSAASYTD. 4 positions are modified to phosphoserine: S149, S152, S155, and S158. Residues T236, D310, and E335 each contribute to the substrate site. 336–338 contacts NAD(+); sequence SVT. Substrate is bound by residues K365 and D369. Residues N370, 401-406, E422, N457, 478-479, and N525 each bind NAD(+); these read GEVGKG and MG.

Belongs to the adenosylhomocysteinase family. In terms of assembly, homotetramer. Forms heteromultimers with AHCYL1 (via the C-terminal region). Interacts with ITPR1; with lower affinity than AHCYL1 and maybe via ITPR1. Interacts with SLC4A4. Interacts with ZCCHC4. It depends on NAD(+) as a cofactor. In terms of processing, phosphorylated during neuronal differentiation at the LISN domain.

It localises to the cytoplasm. The protein resides in the microsome. The catalysed reaction is S-adenosyl-L-homocysteine + H2O = L-homocysteine + adenosine. It participates in amino-acid biosynthesis; L-homocysteine biosynthesis; L-homocysteine from S-adenosyl-L-homocysteine: step 1/1. May regulate the electrogenic sodium/bicarbonate cotransporter SLC4A4 activity and Mg(2+)-sensitivity. On the contrary of its homolog AHCYL1, does not regulate ITPR1 sensitivity to inositol 1,4,5-trisphosphate. The sequence is that of Adenosylhomocysteinase 3 (AHCYL2) from Homo sapiens (Human).